Here is a 392-residue protein sequence, read N- to C-terminus: O-phospho-L-seryl-tRNA:Cys-tRNA synthase (392 aa).

Residues 85 to 86 (AR), Asn-190, and 213 to 215 (SGH) contribute to the pyridoxal 5'-phosphate site. An N6-(pyridoxal phosphate)lysine modification is found at Lys-216.

This sequence belongs to the SepCysS family. As to quaternary structure, homodimer. Interacts with SepRS. Pyridoxal 5'-phosphate serves as cofactor.

It carries out the reaction O-phospho-L-seryl-tRNA(Cys) + hydrogen sulfide + H(+) = L-cysteinyl-tRNA(Cys) + phosphate. Converts O-phospho-L-seryl-tRNA(Cys) (Sep-tRNA(Cys)) to L-cysteinyl-tRNA(Cys) (Cys-tRNA(Cys)). The sequence is that of O-phospho-L-seryl-tRNA:Cys-tRNA synthase from Methanoculleus marisnigri (strain ATCC 35101 / DSM 1498 / JR1).